Reading from the N-terminus, the 378-residue chain is MRVLGLISGTSADGIDVAIAEIQGFQADLSVALLAFETIAYEPSLRDRILEVAAGFPLSVAELTALDAAIAQAFATAAQTLIQQHGAVDLIGSHGQTVYHQPLQAGQLGWSVQLGWGAAIAQQTGITTVSNFRSADLALGGQGAPPVPAVDLWLLGSDSENRCVQNIGGIGNLTWLPRRDHPDWQSEVRGWDTGPGNSLLDLAVQKLSQGRLSYDDGSQWAATGQIDQVLCDRWLQEDDYFRLPPPKSTGRERYGWQFLETWAAELDRLTAADQLATLTEFTAASIVNNYRHFLPALPDRVLVCGGGLHNQFLLQRLQQQLPTVKIASTDDFGVNSQAKEAIAIAVLAYWRQHNVPGNLPAVTGASGPALLGDVFART.

An ATP-binding site is contributed by 9-16; that stretch reads GTSADGID.

It belongs to the anhydro-N-acetylmuramic acid kinase family.

The catalysed reaction is 1,6-anhydro-N-acetyl-beta-muramate + ATP + H2O = N-acetyl-D-muramate 6-phosphate + ADP + H(+). The protein operates within amino-sugar metabolism; 1,6-anhydro-N-acetylmuramate degradation. Its pathway is cell wall biogenesis; peptidoglycan recycling. Functionally, catalyzes the specific phosphorylation of 1,6-anhydro-N-acetylmuramic acid (anhMurNAc) with the simultaneous cleavage of the 1,6-anhydro ring, generating MurNAc-6-P. Is required for the utilization of anhMurNAc either imported from the medium or derived from its own cell wall murein, and thus plays a role in cell wall recycling. The chain is Anhydro-N-acetylmuramic acid kinase from Synechococcus sp. (strain ATCC 27144 / PCC 6301 / SAUG 1402/1) (Anacystis nidulans).